A 101-amino-acid polypeptide reads, in one-letter code: Small ribosomal subunit protein uS14 (101 aa).

This sequence belongs to the universal ribosomal protein uS14 family. In terms of assembly, part of the 30S ribosomal subunit. Contacts proteins S3 and S10.

Its function is as follows. Binds 16S rRNA, required for the assembly of 30S particles and may also be responsible for determining the conformation of the 16S rRNA at the A site. The sequence is that of Small ribosomal subunit protein uS14 from Cereibacter sphaeroides (strain ATCC 17029 / ATH 2.4.9) (Rhodobacter sphaeroides).